A 320-amino-acid chain; its full sequence is tRNA (guanine(10)-N2)-dimethyltransferase (320 aa).

In terms of domain architecture, THUMP spans 46–136 (EKFFERLAYT…DDKCYVGLLE (91 aa)).

This sequence belongs to the methyltransferase superfamily. Trm-G10 family. In terms of assembly, monomer.

The protein resides in the cytoplasm. It catalyses the reaction guanosine(10) in tRNA + 2 S-adenosyl-L-methionine = N(2)-dimethylguanosine(10) in tRNA + 2 S-adenosyl-L-homocysteine + 2 H(+). Its function is as follows. Catalyzes the adenosylmethionine-dependent methylation of the exocyclic amino group (N(2)) of guanosine at position 10 of various tRNAs. Acts via a two-step process that leads to the formation of either N(2)-monomethyl (m(2)G) or N(2)-dimethylguanosine (m(2)(2)G). This Archaeoglobus fulgidus (strain ATCC 49558 / DSM 4304 / JCM 9628 / NBRC 100126 / VC-16) protein is tRNA (guanine(10)-N2)-dimethyltransferase (trmG10).